The following is a 166-amino-acid chain: Large ribosomal subunit protein uL10 (166 aa).

It belongs to the universal ribosomal protein uL10 family. As to quaternary structure, part of the ribosomal stalk of the 50S ribosomal subunit. The N-terminus interacts with L11 and the large rRNA to form the base of the stalk. The C-terminus forms an elongated spine to which L12 dimers bind in a sequential fashion forming a multimeric L10(L12)X complex.

In terms of biological role, forms part of the ribosomal stalk, playing a central role in the interaction of the ribosome with GTP-bound translation factors. This Shewanella woodyi (strain ATCC 51908 / MS32) protein is Large ribosomal subunit protein uL10.